A 219-amino-acid chain; its full sequence is Imidazole glycerol phosphate synthase subunit HisH (219 aa).

A Glutamine amidotransferase type-1 domain is found at 2 to 218 (KVVVIDSGTG…MVWTPEGTSG (217 aa)). Residue C87 is the Nucleophile of the active site. Residues H193 and E195 contribute to the active site.

Heterodimer of HisH and HisF.

It localises to the cytoplasm. It catalyses the reaction 5-[(5-phospho-1-deoxy-D-ribulos-1-ylimino)methylamino]-1-(5-phospho-beta-D-ribosyl)imidazole-4-carboxamide + L-glutamine = D-erythro-1-(imidazol-4-yl)glycerol 3-phosphate + 5-amino-1-(5-phospho-beta-D-ribosyl)imidazole-4-carboxamide + L-glutamate + H(+). It carries out the reaction L-glutamine + H2O = L-glutamate + NH4(+). It participates in amino-acid biosynthesis; L-histidine biosynthesis; L-histidine from 5-phospho-alpha-D-ribose 1-diphosphate: step 5/9. In terms of biological role, IGPS catalyzes the conversion of PRFAR and glutamine to IGP, AICAR and glutamate. The HisH subunit catalyzes the hydrolysis of glutamine to glutamate and ammonia as part of the synthesis of IGP and AICAR. The resulting ammonia molecule is channeled to the active site of HisF. The sequence is that of Imidazole glycerol phosphate synthase subunit HisH from Granulibacter bethesdensis (strain ATCC BAA-1260 / CGDNIH1).